The primary structure comprises 185 residues: Ribosome-recycling factor (185 aa).

This sequence belongs to the RRF family.

The protein resides in the cytoplasm. Functionally, responsible for the release of ribosomes from messenger RNA at the termination of protein biosynthesis. May increase the efficiency of translation by recycling ribosomes from one round of translation to another. This chain is Ribosome-recycling factor, found in Thermosipho melanesiensis (strain DSM 12029 / CIP 104789 / BI429).